Consider the following 955-residue polypeptide: MMTAHRKSNGDTTNFARRHIGPSARDVAAMLETVGAKSVDALMAETLPASIRQAAPLDLGKPLSETEAIAHMGELAAQNQVFTSLIGQGYSGTILPAVIQRNILENPAWYTAYTPYQPEISQGRLEALFNFQTMICDLTGLDVANASLLDEATAAAEAMALAERHSRVEAKAFFVDKDVHPQTLAVMRTRAEPLGWNLIVGDPLTDLDKADVLGALLQYPGSSGALRDLRPAIAALKAKGALAIVAADLLALTLLASPGELGADIAIGSAQRFGVPMGYGGPHAAYMAVRDALKRSLPGRIVGLSVDSRGMPAYRLALQTREQHIRREKATSNICTAQVLLAVIAAMYAVYHGPEGLSQIARQVHRRAAVLAAGLRKLGFAPHSDSFFDTLSVDAGAKRAEIVARAAAEKINLGVGETALRIALDETTTPATVEAVWRAFGGQLAYAELDATTREALPEALKRTTAFLTHPVFHAHRSETEMLRYMRKLSDRDLALDRAMIPLGSCTMKLNATTEMMPLTWPEFGSLHPFAPREQAKGYHALFARLEKWLCDITGYDAISLQPNSGAQGEYAGLLAIRGYHAARGEAHRKICLIPSSAHGTNPASAAMVGMDVVVVACEKNGDVDVNDLRAKADKHANDLAAIMITYPSTHGVFEEHIREICDIVHGHGGQVYLDGANLNAQVGLSRPGDYGADVSHLNLHKTFCIPHGGGGPGMGPIGVKAHLAPFLPGHPATRGDAPVGPVSAAPFGSASILTISYIYILMMGGEGLKRATEIAILNANYIAARLDAHFPVLYKNARGRVAHECIVDPRALKTTSGVTVDDIAKRLIDYGFHAPTMSFPVPGTLMIEPTESESKAELDRFCDAMIAIRKEIGEVEAGRFKIEASPLRHAPHTVHDIADDAWARAYSRAEGCFPDGVSRTDKYWSPVGRVDNVYGDRNLVCSCPPVSDYAEAAE.

Lys-702 is modified (N6-(pyridoxal phosphate)lysine).

Belongs to the GcvP family. In terms of assembly, the glycine cleavage system is composed of four proteins: P, T, L and H. The cofactor is pyridoxal 5'-phosphate.

The enzyme catalyses N(6)-[(R)-lipoyl]-L-lysyl-[glycine-cleavage complex H protein] + glycine + H(+) = N(6)-[(R)-S(8)-aminomethyldihydrolipoyl]-L-lysyl-[glycine-cleavage complex H protein] + CO2. In terms of biological role, the glycine cleavage system catalyzes the degradation of glycine. The P protein binds the alpha-amino group of glycine through its pyridoxal phosphate cofactor; CO(2) is released and the remaining methylamine moiety is then transferred to the lipoamide cofactor of the H protein. This Bradyrhizobium diazoefficiens (strain JCM 10833 / BCRC 13528 / IAM 13628 / NBRC 14792 / USDA 110) protein is Glycine dehydrogenase (decarboxylating).